The primary structure comprises 482 residues: Histone deacetylase 1 (482 aa).

The tract at residues R9–D321 is histone deacetylase. Residues G27 and K31 each coordinate 1D-myo-inositol 1,4,5,6-tetrakisphosphate. K74 carries the N6-acetyllysine; alternate modification. A Glycyl lysine isopeptide (Lys-Gly) (interchain with G-Cter in SUMO2); alternate cross-link involves residue K74. The active site involves H141. Zn(2+) contacts are provided by D176 and H178. Residue K220 is modified to N6-acetyllysine. C261 carries the post-translational modification S-nitrosocysteine. Zn(2+) is bound at residue D264. A 1D-myo-inositol 1,4,5,6-tetrakisphosphate-binding site is contributed by R270. C273 carries the post-translational modification S-nitrosocysteine. A compositionally biased stretch (acidic residues) spans P390 to D400. The interval P390–A482 is disordered. A phosphoserine mark is found at S393, S406, and S409. Residues P401–C416 are compositionally biased toward basic and acidic residues. Residues E417 to G427 are compositionally biased toward acidic residues. Residues S421 and S423 each carry the phosphoserine; by CK2 modification. N6-methylated lysine; by EHMT2 is present on K432. K438 participates in a covalent cross-link: Glycyl lysine isopeptide (Lys-Gly) (interchain with G-Cter in SUMO2). Over residues V443–A482 the composition is skewed to basic and acidic residues. K444 is covalently cross-linked (Glycyl lysine isopeptide (Lys-Gly) (interchain with G-Cter in SUMO2); alternate). Residue K444 forms a Glycyl lysine isopeptide (Lys-Gly) (interchain with G-Cter in SUMO); alternate linkage. Residues K456, K457, and K473 each participate in a glycyl lysine isopeptide (Lys-Gly) (interchain with G-Cter in SUMO2) cross-link. A Glycyl lysine isopeptide (Lys-Gly) (interchain with G-Cter in SUMO2); alternate cross-link involves residue K476. K476 is covalently cross-linked (Glycyl lysine isopeptide (Lys-Gly) (interchain with G-Cter in SUMO); alternate). K480 participates in a covalent cross-link: Glycyl lysine isopeptide (Lys-Gly) (interchain with G-Cter in SUMO2).

It belongs to the histone deacetylase family. HD type 1 subfamily. Part of the core histone deacetylase (HDAC) complex composed of HDAC1, HDAC2, RBBP4 and RBBP7, the core complex associates with SIN3, SAP18 and SAP30 to form the SIN3 HDAC complex. Component of the nucleosome remodeling and deacetylase (NuRD) repressor complex, composed of core proteins MTA1, MTA2, MTA3, RBBP4, RBBP7, HDAC1, HDAC2, MBD2, MBD3, and peripherally associated proteins CDK2AP1, CDK2AP2, GATAD2A, GATAD2B, CHD3, CHD4 and CHD5. The exact stoichiometry of the NuRD complex is unknown, and some subunits such as MBD2 and MBD3, GATAD2A and GATAD2B, and CHD3, CHD4 and CHD5 define mutually exclusive NuRD complexes. Component of a BHC histone deacetylase complex that contains HDAC1, HDAC2, HMG20B/BRAF35, KDM1A, RCOR1/CoREST and PHF21A/BHC80. The BHC complex may also contain ZMYM2, ZNF217, ZMYM3, GSE1 and GTF2I. Component of a mSin3A corepressor complex that contains SIN3A, SAP130, SUDS3/SAP45, ARID4B/SAP180, HDAC1 and HDAC2. Component of the SIN3B complex, which includes SIN3B, HDAC1, PHF12 and MORF4L1. Found in a trimeric complex with APBB1 and TSHZ3; the interaction between HDAC1 and APBB1 is mediated by TSHZ3. Forms a complex comprising APPL1, RUVBL2, APPL2, CTNNB1 and HDAC2. Component of a RCOR/GFI/KDM1A/HDAC complex. Part of a complex composed of TRIM28, HDAC1, HDAC2 and EHMT2. Part of a complex containing at least CDYL, MIER1, MIER2, HDAC1 and HDAC2. The large PER complex involved in the histone deacetylation is composed of at least HDAC1, PER2, SFPQ and SIN3A. Associates with the 9-1-1 complex; interacts with HUS1. Found in a complex with DNMT3A and HDAC7. Found in a complex with YY1, SIN3A and GON4L. Identified in a histone deacetylase complex that contains DNTTIP1, HDAC1 and MIDEAS; this complex assembles into a tetramer that contains four copies of each protein chain. Found in a complex composed of at least SINHCAF, SIN3A, HDAC1, SAP30, RBBP4, OGT and TET1. Interacts with GFI1; the interaction is direct. Interacts directly with GFI1B. Interacts with TSHZ3 (via N-terminus); the interaction is direct. Interacts with APEX1; the interaction is not dependent on the acetylated status of APEX1. Interacts with BANP. Interacts with BAZ2A/TIP5. Interacts with BCL6. Interacts with BCOR. Interacts with BHLHE40/DEC1. Interacts with BRCC3; this interaction is enhanced in the presence of PWWP2B. Interacts with BRMS1. Interacts with BRMS1L. Interacts with C10orf90/FATS (via its N-terminal); the interaction prevents binding of HDAC1 to CDKN1A/p21 and facilitates the acetylation and stabilization of CDKN1A/p21. Interacts with CBFA2T3. Interacts with CCAR2. Interacts with CDK2AP1. Interacts with CHD3. Interacts with CHD4. Interacts with CHFR. Interacts with CIART. Interacts with CDKN1A/p21. Interacts with CDK5 complexed to CDK5R1 (p25). Interacts with CRY1. Interacts with DAXX. Interacts with DDIT3/CHOP. Interacts with DDX5. Interacts with DHX36; this interaction occurs in a RNA-dependent manner. Interacts with DNMT1. Interacts with DNTTIP1. Interacts with E4F1. Interacts with EP300. Interacts with ERCC6. Interacts with GATAD2A. Interacts with HCFC1. Interacts with HDAC9. Interacts with HUS1. Interacts with INSM1. Interacts with KDM4A. Interacts with KDM5A; this interaction impairs histone deacetylation. Interacts with KDM5B. Interacts with KLF1. Interacts with MBD3L2. Interacts with MIER1. Interacts with NFE4. Interacts with NR4A2/NURR1. Interacts with NR1D2 (via C-terminus). Interacts with NRIP1. Interacts with NSD2. Interacts with PACS2. Interacts with PHB2. Interacts with PPHLN1. Interacts with PRDM6. Interacts with PRDM16. Interacts with PWWP2A in a MTA1-dependent manner. Interacts with PWWP2B. Interacts with RB1. Interacts with RERE. Interacts with SANBR (via the BTB domain). Interacts with SAMSN1. Interacts with SAP30L. Interacts with SETDB1. Interacts with SIN3A. Interacts with SMAD3. Interacts with SMAD4; positively regulated by ZBTB7A. Interacts with SMARCAD1. Interacts with SMARCA4/BRG1. Interacts with SMYD2. Interacts with SMYD4 (via MYND-type zinc finger). Interacts with SP1; the interaction deacetylates SP1 and regulates its transcriptional activity. Interacts with SP3; the interaction deacetylates SP3 and regulates its transcriptional activity. In vitro, C(18) ceramides increase this interaction and the subsequent SP3 deacetylation and SP3-mediated repression of the TERT promoter. Interacts with SPEN/MINT. Interacts with SPHK2. Interacts with SUV39H1. Interacts with TGIF. Interacts with TGIF2. Interacts with TRAF6. Interacts with TRIM28; the interaction recruits HDAC1 to E2F1 and inhibits its acetylation. Interacts with TSC22D3 isoform 1; this interaction affects HDAC1 activity on MYOG promoter and thus inhibits MYOD1 transcriptional activity. Interacts with UHRF1. Interacts with UHRF2. Interacts with ZBTB7A. Interacts with ZMYND8. Interacts with ZMYND15. Interacts with ZNF431. Interacts with ZNF516; this interaction is enhanced in the presence of PWWP2B. Interacts with ZNF541. Interacts with ZNF638. Interacts with ZNHIT1. Interacts with the non-histone region of MACROH2A1. Identified in a complex with HDAC2, KCTD19, DNTTIP1 and ZNF541. Interacts with VRK1. In terms of assembly, (Microbial infection) Interacts with SV40 large T antigen. Zn(2+) serves as cofactor. In terms of processing, sumoylated on Lys-444 and Lys-476; which promotes enzymatic activity. Desumoylated by SENP1. Phosphorylation on Ser-421 and Ser-423 promotes enzymatic activity and interactions with NuRD and SIN3 complexes. Phosphorylated by CDK5. Post-translationally, ubiquitinated by CHFR, leading to its degradation by the proteasome. Ubiquitinated by KCTD11, leading to proteasomal degradation. Ubiquitous, with higher levels in heart, pancreas and testis, and lower levels in kidney and brain.

It is found in the nucleus. It catalyses the reaction N(6)-acetyl-L-lysyl-[histone] + H2O = L-lysyl-[histone] + acetate. It carries out the reaction N(6)-acetyl-L-lysyl-[protein] + H2O = L-lysyl-[protein] + acetate. The catalysed reaction is N(6)-(2E)-butenoyl-L-lysyl-[protein] + H2O = (2E)-2-butenoate + L-lysyl-[protein]. The enzyme catalyses N(6)-[(S)-lactoyl]-L-lysyl-[protein] + H2O = (S)-lactate + L-lysyl-[protein]. Its activity is regulated as follows. Inositol tetraphosphate (1D-myo-inositol 1,4,5,6-tetrakisphosphate) may act as an intermolecular glue between HDAC1 and N-Cor repressor complex components. In terms of biological role, histone deacetylase that catalyzes the deacetylation of lysine residues on the N-terminal part of the core histones (H2A, H2B, H3 and H4). Histone deacetylation gives a tag for epigenetic repression and plays an important role in transcriptional regulation, cell cycle progression and developmental events. Histone deacetylases act via the formation of large multiprotein complexes. Acts as a component of the histone deacetylase NuRD complex which participates in the remodeling of chromatin. As part of the SIN3B complex is recruited downstream of the constitutively active genes transcriptional start sites through interaction with histones and mitigates histone acetylation and RNA polymerase II progression within transcribed regions contributing to the regulation of transcription. Also functions as a deacetylase for non-histone targets, such as NR1D2, RELA, SP1, SP3, STAT3 and TSHZ3. Deacetylates SP proteins, SP1 and SP3, and regulates their function. Component of the BRG1-RB1-HDAC1 complex, which negatively regulates the CREST-mediated transcription in resting neurons. Upon calcium stimulation, HDAC1 is released from the complex and CREBBP is recruited, which facilitates transcriptional activation. Deacetylates TSHZ3 and regulates its transcriptional repressor activity. Deacetylates 'Lys-310' in RELA and thereby inhibits the transcriptional activity of NF-kappa-B. Deacetylates NR1D2 and abrogates the effect of KAT5-mediated relieving of NR1D2 transcription repression activity. Component of a RCOR/GFI/KDM1A/HDAC complex that suppresses, via histone deacetylase (HDAC) recruitment, a number of genes implicated in multilineage blood cell development. Involved in CIART-mediated transcriptional repression of the circadian transcriptional activator: CLOCK-BMAL1 heterodimer. Required for the transcriptional repression of circadian target genes, such as PER1, mediated by the large PER complex or CRY1 through histone deacetylation. In addition to protein deacetylase activity, also has protein-lysine deacylase activity: acts as a protein decrotonylase and delactylase by mediating decrotonylation ((2E)-butenoyl) and delactylation (lactoyl) of histones, respectively. This Homo sapiens (Human) protein is Histone deacetylase 1.